A 467-amino-acid chain; its full sequence is UPF0236 protein TTE0033/TTE0744/TTE0838/TTE0852/TTE1082/TTE1247/TTE1519/TTE1678/TTE1739/TTE1823/TTE2212 (467 aa).

The protein belongs to the UPF0236 family.

This chain is UPF0236 protein TTE0033/TTE0744/TTE0838/TTE0852/TTE1082/TTE1247/TTE1519/TTE1678/TTE1739/TTE1823/TTE2212, found in Caldanaerobacter subterraneus subsp. tengcongensis (strain DSM 15242 / JCM 11007 / NBRC 100824 / MB4) (Thermoanaerobacter tengcongensis).